The sequence spans 410 residues: Phosphoglycerate kinase (410 aa).

Substrate contacts are provided by residues 19-21, Arg34, 57-60, Arg114, and Arg154; these read DLN and HQGK. ATP contacts are provided by residues Glu332 and 358-361; that span reads GGHS.

It belongs to the phosphoglycerate kinase family. Homodimer.

The protein localises to the cytoplasm. The enzyme catalyses (2R)-3-phosphoglycerate + ATP = (2R)-3-phospho-glyceroyl phosphate + ADP. It functions in the pathway carbohydrate degradation; glycolysis; pyruvate from D-glyceraldehyde 3-phosphate: step 2/5. The sequence is that of Phosphoglycerate kinase (pgk) from Pyrococcus abyssi (strain GE5 / Orsay).